We begin with the raw amino-acid sequence, 456 residues long: MKTIIIRKIPPIDDFKRFVPKRFSRFPQLYLELLENKNKVKLNCIGKEFVPTTPPLSTGRETIVSKDPHVVQSSISNTPIRTEIKDTPRYEETPIKRTITVTNVKTVKSSSISGMNGRNRLYDDDLFDDDRYKSPTTRKFQGEKRDEDIRLIPKSSNIGSSKYKPVLTRVEENENKKIHIDQRKESIVNDERKKNPEFREKPDKNEDKKVKPPPSLKEIENKGIDHEENEEDKKRELMFKLQLLQKQYPLRDIPDFTIRSEYKSMKKTYDIIVKQLSVDSSVETYKNYLVGGFMVCEMVFGRIGFDMEGFTQQQLLSMNSYEKLLLELGEKTYTPAGMDKWPVEVRLALAILFNAVWFIAAKMIMKKTKINILSLFNNTKGLNKSGTTPNSVSPRTWGNSKSPQSEFNFIGRKNENNSVGRTQMKGPSINRIDEGFGSESDESRREMREQGIETLK.

Basic and acidic residues-rich tracts occupy residues 181 to 210 (DQRK…DKKV) and 217 to 231 (KEIE…ENEE). Residues 181–231 (DQRKESIVNDERKKNPEFREKPDKNEDKKVKPPPSLKEIENKGIDHEENEE) are disordered. The stretch at 216 to 248 (LKEIENKGIDHEENEEDKKRELMFKLQLLQKQY) forms a coiled coil. The chain crosses the membrane as a helical span at residues 347 to 365 (LALAILFNAVWFIAAKMIM). Over residues 383 to 407 (NKSGTTPNSVSPRTWGNSKSPQSEF) the composition is skewed to polar residues. The interval 383–456 (NKSGTTPNSV…MREQGIETLK (74 aa)) is disordered. Residues 441–456 (DESRREMREQGIETLK) are compositionally biased toward basic and acidic residues.

It belongs to the IIV-6 067R family.

The protein localises to the membrane. This is an uncharacterized protein from Invertebrate iridescent virus 6 (IIV-6).